Consider the following 218-residue polypeptide: Large ribosomal subunit protein bL25 (218 aa).

Positions 197-218 are disordered; sequence PAEESGEKPVAHIEEKESTEKE. Basic and acidic residues predominate over residues 201–218; that stretch reads SGEKPVAHIEEKESTEKE.

The protein belongs to the bacterial ribosomal protein bL25 family. CTC subfamily. As to quaternary structure, part of the 50S ribosomal subunit; part of the 5S rRNA/L5/L18/L25 subcomplex. Contacts the 5S rRNA. Binds to the 5S rRNA independently of L5 and L18.

Its function is as follows. This is one of the proteins that binds to the 5S RNA in the ribosome where it forms part of the central protuberance. This is Large ribosomal subunit protein bL25 from Dehalococcoides mccartyi (strain ATCC BAA-2100 / JCM 16839 / KCTC 5957 / BAV1).